Here is a 429-residue protein sequence, read N- to C-terminus: MFS-type efflux pump MSMEG_3705 (429 aa).

A run of 12 helical transmembrane segments spans residues Ala-21–Leu-41, Ala-59–Val-79, Gly-86–Gly-106, Leu-115–Val-137, Leu-150–Leu-170, Phe-181–Val-201, Phe-228–Phe-248, Val-264–Gly-284, Leu-299–Val-319, Leu-327–Ile-347, Ala-361–Leu-381, and Ala-397–Ser-417.

Belongs to the major facilitator superfamily.

The protein localises to the cell inner membrane. Probably plays a role in bacterial growth and resistance to antibiotics. The chain is MFS-type efflux pump MSMEG_3705 from Mycolicibacterium smegmatis (strain ATCC 700084 / mc(2)155) (Mycobacterium smegmatis).